A 64-amino-acid polypeptide reads, in one-letter code: Kappa-lycotoxin-Os1a (64 aa).

Cystine bridges form between Cys-10–Cys-26, Cys-17–Cys-56, Cys-19–Cys-42, and Cys-28–Cys-40.

The protein belongs to the neurotoxin 04 (omega-agtx) family. 01 (type I omega-agtx) subfamily. In terms of tissue distribution, expressed by the venom gland.

Its subcellular location is the secreted. Insecticidal to house crickets. It induces an excitatory slow-onset impact that leads to irreversible spastic paralysis. It also modifies human voltage-gated potassium channel Kv1.5/KCNA5. Most likely, it binds to the voltage-sensing domain of the channel, suggesting it does not block the pore but prevents its opening at physiological membrane potentials. The recombinant peptide binds to the channel in an irreversible manner and slows down the hKv1.5 current activation kinetics. It is not toxic to mice, when intracranially injected (at 0.5 ug/g mouse). The chain is Kappa-lycotoxin-Os1a from Oculicosa supermirabilis (Central Asian wolf-spider).